The sequence spans 498 residues: ATP synthase subunit beta, chloroplastic (498 aa).

Position 172–179 (Gly172–Thr179) interacts with ATP.

Belongs to the ATPase alpha/beta chains family. In terms of assembly, F-type ATPases have 2 components, CF(1) - the catalytic core - and CF(0) - the membrane proton channel. CF(1) has five subunits: alpha(3), beta(3), gamma(1), delta(1), epsilon(1). CF(0) has four main subunits: a(1), b(1), b'(1) and c(9-12).

It is found in the plastid. Its subcellular location is the chloroplast thylakoid membrane. It catalyses the reaction ATP + H2O + 4 H(+)(in) = ADP + phosphate + 5 H(+)(out). In terms of biological role, produces ATP from ADP in the presence of a proton gradient across the membrane. The catalytic sites are hosted primarily by the beta subunits. The sequence is that of ATP synthase subunit beta, chloroplastic from Cinnamomum camphora (Camphor tree).